We begin with the raw amino-acid sequence, 155 residues long: Basic phospholipase A2 PC9 (155 aa).

The signal sequence occupies residues 1 to 21 (MYPAHLLVLLAVCVSLLGASA). A propeptide spanning residues 22–27 (ISPRPL) is cleaved from the precursor. Cystine bridges form between cysteine 38–cysteine 98, cysteine 54–cysteine 144, cysteine 56–cysteine 72, cysteine 71–cysteine 125, cysteine 78–cysteine 118, cysteine 87–cysteine 111, and cysteine 105–cysteine 116. Residues tyrosine 55, glycine 57, and glycine 59 each coordinate Ca(2+). Histidine 75 is an active-site residue. A Ca(2+)-binding site is contributed by aspartate 76. Aspartate 119 is an active-site residue.

Belongs to the phospholipase A2 family. Group I subfamily. D49 sub-subfamily. It depends on Ca(2+) as a cofactor. As to expression, expressed by the venom gland.

It is found in the secreted. The enzyme catalyses a 1,2-diacyl-sn-glycero-3-phosphocholine + H2O = a 1-acyl-sn-glycero-3-phosphocholine + a fatty acid + H(+). Its function is as follows. Snake venom phospholipase A2 (PLA2) that inhibits neuromuscular transmission by blocking acetylcholine release from the nerve termini. PLA2 catalyzes the calcium-dependent hydrolysis of the 2-acyl groups in 3-sn-phosphoglycerides. The sequence is that of Basic phospholipase A2 PC9 from Laticauda colubrina (Yellow-lipped sea krait).